The sequence spans 88 residues: Small ribosomal subunit protein bS20 (88 aa).

The protein belongs to the bacterial ribosomal protein bS20 family.

Functionally, binds directly to 16S ribosomal RNA. In Rhodopseudomonas palustris (strain BisB18), this protein is Small ribosomal subunit protein bS20.